The chain runs to 74 residues: MNRLIILVFAAVFLTLASAEVSEDVNMAKRGVPCRCDSDGPHVRGNTLTGTVWVFGCPSGWHKCQKGSSTCCKQ.

The N-terminal stretch at 1-19 is a signal peptide; that stretch reads MNRLIILVFAAVFLTLASA. Residues 20 to 28 constitute a propeptide that is removed on maturation; it reads EVSEDVNMA. Cystine bridges form between cysteine 34–cysteine 71, cysteine 36–cysteine 64, and cysteine 57–cysteine 72.

The protein belongs to the sea anemone sodium channel inhibitory toxin family. Type I subfamily.

Its subcellular location is the secreted. It localises to the nematocyst. In terms of biological role, binds specifically to voltage-gated sodium channels (Nav), thereby delaying their inactivation during signal transduction. This is Delta-stichotoxin-Sgt2a from Stichodactyla gigantea (Giant carpet anemone).